The chain runs to 225 residues: tRNA (guanine-N(1)-)-methyltransferase (225 aa).

S-adenosyl-L-methionine contacts are provided by residues Gly112 and 132–137 (IGDYVL).

It belongs to the RNA methyltransferase TrmD family. In terms of assembly, homodimer.

The protein localises to the cytoplasm. The enzyme catalyses guanosine(37) in tRNA + S-adenosyl-L-methionine = N(1)-methylguanosine(37) in tRNA + S-adenosyl-L-homocysteine + H(+). In terms of biological role, specifically methylates guanosine-37 in various tRNAs. The sequence is that of tRNA (guanine-N(1)-)-methyltransferase from Bacteroides thetaiotaomicron (strain ATCC 29148 / DSM 2079 / JCM 5827 / CCUG 10774 / NCTC 10582 / VPI-5482 / E50).